The chain runs to 119 residues: Large ribosomal subunit protein uL18 (119 aa).

Positions 1–26 (MGQNDKAARRQKIKLRSKTRGQGTAA) are disordered. Residues 9 to 19 (RRQKIKLRSKT) are compositionally biased toward basic residues.

It belongs to the universal ribosomal protein uL18 family. Part of the 50S ribosomal subunit; part of the 5S rRNA/L5/L18/L25 subcomplex. Contacts the 5S and 23S rRNAs.

This is one of the proteins that bind and probably mediate the attachment of the 5S RNA into the large ribosomal subunit, where it forms part of the central protuberance. In Prosthecochloris aestuarii (strain DSM 271 / SK 413), this protein is Large ribosomal subunit protein uL18.